Consider the following 91-residue polypeptide: Probable Fe(2+)-trafficking protein (91 aa).

The protein belongs to the Fe(2+)-trafficking protein family.

Could be a mediator in iron transactions between iron acquisition and iron-requiring processes, such as synthesis and/or repair of Fe-S clusters in biosynthetic enzymes. This chain is Probable Fe(2+)-trafficking protein, found in Burkholderia cenocepacia (strain ATCC BAA-245 / DSM 16553 / LMG 16656 / NCTC 13227 / J2315 / CF5610) (Burkholderia cepacia (strain J2315)).